A 390-amino-acid polypeptide reads, in one-letter code: MNSPQEISILFFFIIFLDYVSAQSPPPPNLYATSDLFKPSLAIITGVFSIVFTLTFVLLVYAKCFHNDLRSETDSDGERIRHDRLWQGLFNRSSRFSGLDKKAIESLPFFRFSALKGLKQGLECSVCLSKFEDVEILRLLPKCRHAFHIGCIDQWLEQHATCPLCRNRVNIEDDLSVLGNSSTSLRILNQSETREEDSRLEIYIEREEGTNDGSSRFSSFRKILKKSLLLEREGNENIDEKKLMHKFNHRIVVSDAVFKNRWSNITSSDLTFLTSEMLNSVSSDRFSSVDRVHRGNLRDKEDMEMKRMLIKHKDSSRRTVSEITTVSREKAVGGSYRGSTASTSQNYAVTATTEERRRRLWLPIARRTAQWFVNREKSNDLNTTRQNLNV.

Positions 1–22 are cleaved as a signal peptide; it reads MNSPQEISILFFFIIFLDYVSA. A helical membrane pass occupies residues 41-61; sequence LAIITGVFSIVFTLTFVLLVY. The segment at 124–166 adopts an RING-type; atypical zinc-finger fold; sequence CSVCLSKFEDVEILRLLPKCRHAFHIGCIDQWLEQHATCPLCR.

It belongs to the RING-type zinc finger family. ATL subfamily.

It is found in the membrane. It catalyses the reaction S-ubiquitinyl-[E2 ubiquitin-conjugating enzyme]-L-cysteine + [acceptor protein]-L-lysine = [E2 ubiquitin-conjugating enzyme]-L-cysteine + N(6)-ubiquitinyl-[acceptor protein]-L-lysine.. It participates in protein modification; protein ubiquitination. This is Putative RING-H2 finger protein ATL12 (ATL12) from Arabidopsis thaliana (Mouse-ear cress).